The sequence spans 292 residues: Coiled-coil domain-containing protein 137 (292 aa).

The span at 1-16 (MAGLRRGAAAVAPAGT) shows a compositional bias: low complexity. Disordered stretches follow at residues 1–94 (MAGL…AQAA), 139–183 (FLSK…EKAA), 205–243 (PELT…LTTS), and 263–292 (ALKR…EMQL). Composition is skewed to basic and acidic residues over residues 57 to 78 (KNQD…RQEM), 155 to 164 (PKKEKSERKK), and 173 to 183 (KARQRREEKAA). Positions 156-194 (KKEKSERKKAFQKRRLDKARQRREEKAAERLEQELLQDT) form a coiled coil. Low complexity predominate over residues 222–232 (KKSLMLKKLLS). Ser-232 bears the Phosphoserine mark. Positions 234 to 243 (GSVSQPLTTS) are enriched in polar residues. Positions 247–276 (QRIVAEERERAVNAYRALKRLQQQRQETQS) form a coiled coil.

It is found in the chromosome. In Bos taurus (Bovine), this protein is Coiled-coil domain-containing protein 137 (CCDC137).